The chain runs to 76 residues: DNA gyrase inhibitor YacG (76 aa).

Zn(2+) contacts are provided by C20, C23, C39, and C43. The segment at 54-76 (EEKSIPGAPDLSDSDGWSDDMGY) is disordered. Residues 65 to 76 (SDSDGWSDDMGY) are compositionally biased toward acidic residues.

It belongs to the DNA gyrase inhibitor YacG family. As to quaternary structure, interacts with GyrB. The cofactor is Zn(2+).

In terms of biological role, inhibits all the catalytic activities of DNA gyrase by preventing its interaction with DNA. Acts by binding directly to the C-terminal domain of GyrB, which probably disrupts DNA binding by the gyrase. The sequence is that of DNA gyrase inhibitor YacG from Photobacterium profundum (strain SS9).